The primary structure comprises 279 residues: Eukaryotic translation initiation factor 3 subunit G (279 aa).

Disordered regions lie at residues 1 to 26, 66 to 115, and 152 to 171; these read MSTGLLDSWADAGDEFSAPPEVIANP, RKNW…KAHE, and TPSGTTPEPTSEGGAGAAGA. Ser-78 is modified (phosphoserine). Over residues 102-115 the composition is skewed to basic and acidic residues; that stretch reads KQDEKKEEEDKAHE. Residues 152-163 show a composition bias toward low complexity; the sequence is TPSGTTPEPTSE. In terms of domain architecture, RRM spans 197 to 276; that stretch reads TTLKVSQLNS…LILHLEWSKK (80 aa).

This sequence belongs to the eIF-3 subunit G family. As to quaternary structure, component of the eukaryotic translation initiation factor 3 (eIF-3) complex.

It is found in the cytoplasm. Functionally, RNA-binding component of the eukaryotic translation initiation factor 3 (eIF-3) complex, which is involved in protein synthesis of a specialized repertoire of mRNAs and, together with other initiation factors, stimulates binding of mRNA and methionyl-tRNAi to the 40S ribosome. The eIF-3 complex specifically targets and initiates translation of a subset of mRNAs involved in cell proliferation. This subunit can bind 18S rRNA. In Candida albicans (strain SC5314 / ATCC MYA-2876) (Yeast), this protein is Eukaryotic translation initiation factor 3 subunit G.